A 76-amino-acid chain; its full sequence is UPF0291 protein Aflv_1503 (76 aa).

The segment at 56–76 is disordered; it reads DPNGNDVTPQKLKDSKKKRLH.

It belongs to the UPF0291 family.

The protein resides in the cytoplasm. The sequence is that of UPF0291 protein Aflv_1503 from Anoxybacillus flavithermus (strain DSM 21510 / WK1).